Consider the following 394-residue polypeptide: Phosphoglycerate kinase (394 aa).

Substrate contacts are provided by residues 21–23 (DLN), arginine 36, 60–63 (HLGN), arginine 114, and arginine 147. Residues lysine 198, glutamate 315, and 341–344 (GGET) contribute to the ATP site.

The protein belongs to the phosphoglycerate kinase family. Monomer.

The protein localises to the cytoplasm. The enzyme catalyses (2R)-3-phosphoglycerate + ATP = (2R)-3-phospho-glyceroyl phosphate + ADP. It functions in the pathway carbohydrate degradation; glycolysis; pyruvate from D-glyceraldehyde 3-phosphate: step 2/5. In Wigglesworthia glossinidia brevipalpis, this protein is Phosphoglycerate kinase.